The primary structure comprises 130 residues: Fluoride-specific ion channel FluC (130 aa).

4 consecutive transmembrane segments (helical) span residues 9-29 (LAII…TIFL), 39-59 (YATF…VTLA), 71-91 (LLLA…ALEV), and 104-124 (VLYG…GSLI). 2 residues coordinate Na(+): Gly79 and Thr82.

The protein belongs to the fluoride channel Fluc/FEX (TC 1.A.43) family.

Its subcellular location is the cell inner membrane. The enzyme catalyses fluoride(in) = fluoride(out). Na(+) is not transported, but it plays an essential structural role and its presence is essential for fluoride channel function. Functionally, fluoride-specific ion channel. Important for reducing fluoride concentration in the cell, thus reducing its toxicity. This is Fluoride-specific ion channel FluC from Synechocystis sp. (strain ATCC 27184 / PCC 6803 / Kazusa).